The chain runs to 372 residues: 2-aminoethylphosphonate--pyruvate transaminase 2 (372 aa).

Lys192 is subject to N6-(pyridoxal phosphate)lysine.

This sequence belongs to the class-V pyridoxal-phosphate-dependent aminotransferase family. PhnW subfamily. Homodimer. The cofactor is pyridoxal 5'-phosphate.

The enzyme catalyses (2-aminoethyl)phosphonate + pyruvate = phosphonoacetaldehyde + L-alanine. Involved in phosphonate degradation. This chain is 2-aminoethylphosphonate--pyruvate transaminase 2, found in Polaromonas sp. (strain JS666 / ATCC BAA-500).